The chain runs to 207 residues: Ribosomal RNA large subunit methyltransferase E (207 aa).

Residues Gly49, Trp51, Asp69, Asp87, and Asp111 each contribute to the S-adenosyl-L-methionine site. Lys151 (proton acceptor) is an active-site residue.

This sequence belongs to the class I-like SAM-binding methyltransferase superfamily. RNA methyltransferase RlmE family.

Its subcellular location is the cytoplasm. It catalyses the reaction uridine(2552) in 23S rRNA + S-adenosyl-L-methionine = 2'-O-methyluridine(2552) in 23S rRNA + S-adenosyl-L-homocysteine + H(+). Its function is as follows. Specifically methylates the uridine in position 2552 of 23S rRNA at the 2'-O position of the ribose in the fully assembled 50S ribosomal subunit. The sequence is that of Ribosomal RNA large subunit methyltransferase E from Oleidesulfovibrio alaskensis (strain ATCC BAA-1058 / DSM 17464 / G20) (Desulfovibrio alaskensis).